A 631-amino-acid polypeptide reads, in one-letter code: Dolichyl-diphosphooligosaccharide--protein glycosyltransferase subunit 2 (631 aa).

The signal sequence occupies residues 1-22 (MALPGSSTVFLLALTIIASTQA). Residues 23–540 (LTPTHYLTKH…REPEKRPPTV (518 aa)) are Lumenal-facing. N-linked (GlcNAc...) asparagine glycosylation is present at N106. A Glycyl lysine isopeptide (Lys-Gly) (interchain with G-Cter in ubiquitin) cross-link involves residue K154. Residues 541-561 (VSNTFTALILSPLLLLFALWI) form a helical membrane-spanning segment. Residues 562–571 (RIGANVSNFT) lie on the Cytoplasmic side of the membrane. The helical transmembrane segment at 572-592 (FAPSTIVFHLGHAAMLGLMYV) threads the bilayer. At 593 to 596 (YWTQ) the chain is on the lumenal side. A helical transmembrane segment spans residues 597-617 (LNMFQTLKYLAILGSVTFLAG). The Cytoplasmic portion of the chain corresponds to 618-631 (NRMLAQQAIKRTAH).

It belongs to the SWP1 family. As to quaternary structure, component of the oligosaccharyltransferase (OST) complex. OST exists in two different complex forms which contain common core subunits RPN1, RPN2, OST48, OST4, DAD1 and TMEM258, either STT3A or STT3B as catalytic subunits, and form-specific accessory subunits. STT3A complex assembly occurs through the formation of 3 subcomplexes. Subcomplex 1 contains RPN1 and TMEM258, subcomplex 2 contains the STT3A-specific subunits STT3A, DC2/OSTC, and KCP2 as well as the core subunit OST4, and subcomplex 3 contains RPN2, DAD1, and OST48. The STT3A complex can form stable complexes with the Sec61 complex or with both the Sec61 and TRAP complexes. Interacts with DDI2. Interacts with TMEM35A/NACHO.

The protein resides in the endoplasmic reticulum. Its subcellular location is the endoplasmic reticulum membrane. The protein operates within protein modification; protein glycosylation. In terms of biological role, subunit of the oligosaccharyl transferase (OST) complex that catalyzes the initial transfer of a defined glycan (Glc(3)Man(9)GlcNAc(2) in eukaryotes) from the lipid carrier dolichol-pyrophosphate to an asparagine residue within an Asn-X-Ser/Thr consensus motif in nascent polypeptide chains, the first step in protein N-glycosylation. N-glycosylation occurs cotranslationally and the complex associates with the Sec61 complex at the channel-forming translocon complex that mediates protein translocation across the endoplasmic reticulum (ER). All subunits are required for a maximal enzyme activity. This is Dolichyl-diphosphooligosaccharide--protein glycosyltransferase subunit 2 from Bos taurus (Bovine).